The following is a 170-amino-acid chain: Ribosome maturation factor RimM (170 aa).

Residues 97-170 form the PRC barrel domain; it reads KNEFYWTDLI…QIRVEWGSDW (74 aa).

Belongs to the RimM family. In terms of assembly, binds ribosomal protein uS19.

The protein localises to the cytoplasm. Its function is as follows. An accessory protein needed during the final step in the assembly of 30S ribosomal subunit, possibly for assembly of the head region. Essential for efficient processing of 16S rRNA. May be needed both before and after RbfA during the maturation of 16S rRNA. It has affinity for free ribosomal 30S subunits but not for 70S ribosomes. This is Ribosome maturation factor RimM from Dechloromonas aromatica (strain RCB).